Consider the following 112-residue polypeptide: Integration host factor subunit alpha (112 aa).

Belongs to the bacterial histone-like protein family. Heterodimer of an alpha and a beta chain.

Functionally, this protein is one of the two subunits of integration host factor, a specific DNA-binding protein that functions in genetic recombination as well as in transcriptional and translational control. The polypeptide is Integration host factor subunit alpha (Rhizobium rhizogenes (strain K84 / ATCC BAA-868) (Agrobacterium radiobacter)).